Consider the following 783-residue polypeptide: Na(+)/H(+) exchanger protein 7 (783 aa).

The chain crosses the membrane as a helical span at residues 1-18; the sequence is MWIKLLFFFTTLLVSTSG. The Extracellular segment spans residues 19 to 108; that stretch reads LGDDGITALL…WHWDYVKNEL (90 aa). The helical transmembrane segment at 109-129 threads the bilayer; sequence VLTLFFIVIGLFKLVYHHTFV. Residues 130-132 lie on the Cytoplasmic side of the membrane; that stretch reads TRK. The chain crosses the membrane as a helical span at residues 133–153; that stretch reads ILPESCCLIFIGIAIGFFFVG. Residues 154–159 are Extracellular-facing; sequence DATHAS. Residues 160-180 form a helical membrane-spanning segment; it reads IKFLEFKSKVFFFYLLPPIIL. Residues 181 to 206 lie on the Cytoplasmic side of the membrane; that stretch reads ESAYSLKDRAFIENIGTILLYAVVGT. The helical transmembrane segment at 207–227 threads the bilayer; it reads ILNIVLLAAALLILIWVGIMG. Over 228–235 the chain is Extracellular; the sequence is KYNLSVMD. A helical transmembrane segment spans residues 236-256; that stretch reads ILTFASLVAAVDPVAVLAVFQ. Residues 257-262 are Cytoplasmic-facing; sequence EVGVNK. A helical transmembrane segment spans residues 263 to 283; sequence MLYFMVFGESLFNDAVTIVCY. The Extracellular segment spans residues 284–299; that stretch reads NLAIEFQTLPDFTWYH. The helical transmembrane segment at 300-320 threads the bilayer; it reads GFLGLLSFLCVSIGGLIIGLI. At 321 to 350 the chain is on the cytoplasmic side; it reads CGAISSFVTKFTTDVRVVEPVVLFGMAYLA. The chain crosses the membrane as a helical span at residues 351 to 371; that stretch reads YLGSEMFHFSGIIALIACGLF. Over 372-390 the chain is Extracellular; the sequence is QTHYACCNISYKSFTSVMY. A glycan (N-linked (GlcNAc...) asparagine) is linked at Asn-379. The helical intramembrane region spans 391–411; the sequence is ITKVCSTLCESLIFIILGVML. Over 412-424 the chain is Extracellular; the sequence is VNEREWFWTDWHP. Residues 425–445 traverse the membrane as a helical segment; that stretch reads VFSAVSVVLCVVVRFGVTFFL. Topologically, residues 446–464 are cytoplasmic; the sequence is TYFVNQFTGGVRHISFQEQ. The chain crosses the membrane as a helical span at residues 465-485; the sequence is FIMSYGGLRGAVSFSLVFMIS. Residues 486-492 lie on the Extracellular side of the membrane; it reads ANPDVKN. The helical transmembrane segment at 493–513 threads the bilayer; it reads TMLGATYAVILFTNIIQGSTI. The Cytoplasmic portion of the chain corresponds to 514-783; the sequence is KLFVKWLNIR…TITESEETSF (270 aa). The stretch at 649–702 forms a coiled coil; that stretch reads DNEDADQRANELIKDVSSIRQLMHNPFEDCYLDRNLTHEEEKEQARLKMKKTRA. Residues 745-783 form a disordered region; sequence RPSTSTRVSVEDEEQGLTMKEMEEEHPLMTITESEETSF.

Belongs to the monovalent cation:proton antiporter 1 (CPA1) transporter (TC 2.A.36) family. In terms of assembly, interacts (via C-terminus) with cmd-1. In terms of tissue distribution, detected in the posterior cells of the intestine.

It localises to the basolateral cell membrane. In terms of biological role, na+/H+ exchanger which mediates the transient acidification of the coelomic space and plays a role in contraction of posterior body muscles during defecation. Probably by regulating the defecation motor program, required for fatty acid uptake by intestinal cells. This is Na(+)/H(+) exchanger protein 7 from Caenorhabditis elegans.